Reading from the N-terminus, the 476-residue chain is MNILFAVSECVPFVKSGGLADVAGALPKELKKLGVDVRIILPNYSLIPQKLRDGCTLHKVINVPLGWRNQYCGILKGEQDGITYYLIDNEYYFKRDSLYGHYDDGERFSYFSKAVLECIPHLDFEVDVLHSHDWHTAMVNFLLREKYQDNPLYERIKTVYTIHNLQFQGVFPPEVMYDLLELGDEYFHSKQLEFYGNVNFMKGGIIASDQITAVSPTYKEEIQYEFFGEKLDGLLRKYNDKLSGIVNGIDTSVYNPETDSYIKAQYDAESLYEKSENKRALQRYFGLPEKEDTPIISMVTRLTKQKGLDLVRTVFREIMEEDVQCIILGSGDSEYEQFFEWMAYEYPEKVKVYIGFNEELAHQVYAGSDLFLMPSLFEPCGLGQLIALAYGTIPIVRETGGLNDTVHSYDEETGEGNGFSFTNFNAHDMLHTIHRAIEFYHDKPVWEQLVKQAMTEDYSWEQSALAYKELYKSLME.

Lysine 15 provides a ligand contact to ADP-alpha-D-glucose.

Belongs to the glycosyltransferase 1 family. Bacterial/plant glycogen synthase subfamily.

It catalyses the reaction [(1-&gt;4)-alpha-D-glucosyl](n) + ADP-alpha-D-glucose = [(1-&gt;4)-alpha-D-glucosyl](n+1) + ADP + H(+). The protein operates within glycan biosynthesis; glycogen biosynthesis. In terms of biological role, synthesizes alpha-1,4-glucan chains using ADP-glucose. This is Glycogen synthase from Bacillus cereus (strain B4264).